Consider the following 184-residue polypeptide: Adenine phosphoribosyltransferase 2 (184 aa).

This sequence belongs to the purine/pyrimidine phosphoribosyltransferase family. In terms of assembly, homodimer.

It is found in the cytoplasm. It catalyses the reaction AMP + diphosphate = 5-phospho-alpha-D-ribose 1-diphosphate + adenine. It participates in purine metabolism; AMP biosynthesis via salvage pathway; AMP from adenine: step 1/1. Its function is as follows. Catalyzes a salvage reaction resulting in the formation of AMP, that is energically less costly than de novo synthesis. The protein is Adenine phosphoribosyltransferase 2 of Rhizobium etli (strain ATCC 51251 / DSM 11541 / JCM 21823 / NBRC 15573 / CFN 42).